We begin with the raw amino-acid sequence, 464 residues long: MTVRQKKTWSDRFEGSLHPAIVEFNASITFDIELIEYDLTGSIAHAKMLAKTGIISEAEAQKLVNGLEQIRQEYRDGNFTPGIDQEDVHFAVERRLTELVGDVGKKLHTARSRNDQVGTDIRLYLRDQIQQIRSQIQAFQQVLLTHAQENVETLIPGYTHLQRAQPISLAHHLLAYFQMAQRDWERLGEIYQRTNVSPLGCGALAGTTFPIDRHYSAELLGFEEVYGNSLDGVSDRDFAIEFLNAASLIMVHLSRLSEEMILWASQEFGFISLTDSCATGSSIMPQKKNPDVPELVRGKAGRVFGHLQGMLVLMKGLPLAYNKDLQEDKEAIFDGVKTVKGCLEAMTVLLGEGITFRKERLSEAVAEDFSNATDVADYLAAKGVPFREAYNLVGKVVKTSLASGKLLKDLTLEEWQALHPNFEADIYDAIAPKQVVAARNSYGGTGFEQIYQAVERAKQQLELS.

It belongs to the lyase 1 family. Argininosuccinate lyase subfamily.

The protein resides in the cytoplasm. The enzyme catalyses 2-(N(omega)-L-arginino)succinate = fumarate + L-arginine. It participates in amino-acid biosynthesis; L-arginine biosynthesis; L-arginine from L-ornithine and carbamoyl phosphate: step 3/3. This Crocosphaera subtropica (strain ATCC 51142 / BH68) (Cyanothece sp. (strain ATCC 51142)) protein is Argininosuccinate lyase.